Reading from the N-terminus, the 223-residue chain is Deoxyribose-phosphate aldolase (223 aa).

The active-site Proton donor/acceptor is Asp-89. Residue Lys-152 is the Schiff-base intermediate with acetaldehyde of the active site. Lys-181 (proton donor/acceptor) is an active-site residue.

Belongs to the DeoC/FbaB aldolase family. DeoC type 1 subfamily.

It is found in the cytoplasm. The catalysed reaction is 2-deoxy-D-ribose 5-phosphate = D-glyceraldehyde 3-phosphate + acetaldehyde. Its pathway is carbohydrate degradation; 2-deoxy-D-ribose 1-phosphate degradation; D-glyceraldehyde 3-phosphate and acetaldehyde from 2-deoxy-alpha-D-ribose 1-phosphate: step 2/2. Functionally, catalyzes a reversible aldol reaction between acetaldehyde and D-glyceraldehyde 3-phosphate to generate 2-deoxy-D-ribose 5-phosphate. The protein is Deoxyribose-phosphate aldolase of Bacillus cereus (strain B4264).